Here is a 280-residue protein sequence, read N- to C-terminus: MSANYWTSSQRLHWLLTKETLAERRKGLEDIFDPGKLQTIKALNPWHVRVYLHTLIHLLGQNLSIRQRILATAEVYLTRFHTKVPFGEINPYLVVATAVYVACKVEEHPQHIRTITSEARSLWPDYISHDPTKIAECEFYLIEELGTYLVIFHPYKSLMQISDAMARSNAQITMAPEEIQVTWSMINDSYITDLHLLNPPHIVAMACIYMTVVLRSHIMRMTMPSEAVKSRIEAFMTFFGESNVDLEQTIDCVQEMISLYVNWDTYSEKQCRVEIAKVIT.

The Cyclin N-terminal domain maps to 23 to 150; that stretch reads ERRKGLEDIF…LIEELGTYLV (128 aa).

The protein belongs to the cyclin family. Cyclin C subfamily. As to quaternary structure, component of the SRB8-11 complex, a regulatory module of the Mediator complex.

It is found in the nucleus. Component of the SRB8-11 complex. The SRB8-11 complex is a regulatory module of the Mediator complex which is itself involved in regulation of basal and activated RNA polymerase II-dependent transcription. The SRB8-11 complex may be involved in the transcriptional repression of a subset of genes regulated by Mediator. It may inhibit the association of the Mediator complex with RNA polymerase II to form the holoenzyme complex. The SRB8-11 complex phosphorylates the C-terminal domain (CTD) of the largest subunit of RNA polymerase II. The protein is RNA polymerase II holoenzyme cyclin-like subunit (SSN8) of Yarrowia lipolytica (strain CLIB 122 / E 150) (Yeast).